The following is a 277-amino-acid chain: uncharacterized protein (277 aa).

32-39 provides a ligand contact to ATP; sequence GPQGSGKS.

This sequence belongs to the GLYK kinase family.

Its subcellular location is the cytoplasm. The protein resides in the nucleus. Functionally, has a role in meiosis. This is an uncharacterized protein from Schizosaccharomyces pombe (strain 972 / ATCC 24843) (Fission yeast).